Consider the following 161-residue polypeptide: Type II secretion system protein M (161 aa).

The Cytoplasmic portion of the chain corresponds to 1–16 (MHNLLALWQQRTRRER). The chain crosses the membrane as a helical span at residues 17-36 (CLLLGMAVVLLIGLVYYTLW). The Periplasmic segment spans residues 37–161 (QPWQNREAQW…TLVLERSDEK (125 aa)).

This sequence belongs to the GSP M family. Type II secretion system is composed of four main components: the outer membrane complex, the inner membrane complex, the cytoplasmic secretion ATPase and the periplasm-spanning pseudopilus. Forms homodimers. Interacts with PulL/GspL. Interacts with PulE/GspE and PulF/GspF.

It localises to the cell inner membrane. Functionally, inner membrane component of the type II secretion system required for the energy-dependent secretion of extracellular factors such as proteases and toxins from the periplasm. Plays a role in the complex assembly and recruits PulL resulting in a stable complex in the inner membrane. Provides thus a link between the energy-providing PulE protein in the cytoplasm and the rest of the T2SS machinery. This chain is Type II secretion system protein M (pulM), found in Klebsiella pneumoniae.